Reading from the N-terminus, the 112-residue chain is Large ribosomal subunit protein P1 (112 aa).

Residues 71–90 (PAQAAAAAPAGGAPAAAAPA) show a composition bias toward low complexity. The tract at residues 71–112 (PAQAAAAAPAGGAPAAAAPAESKEGRRSQGESDDDMGFGLLD) is disordered. The span at 91-100 (ESKEGRRSQG) shows a compositional bias: basic and acidic residues.

This sequence belongs to the eukaryotic ribosomal protein P1/P2 family. As to quaternary structure, P1 and P2 exist as dimers at the large ribosomal subunit.

Its function is as follows. Plays an important role in the elongation step of protein synthesis. This is Large ribosomal subunit protein P1 (rpl-21) from Oscheius tipulae.